Reading from the N-terminus, the 122-residue chain is MIQMQSILQVADNTGARSLMCIKVLGGSKRRYAGIGDIIKVSVKDVAPRGRVKKGEVYNAVVVRTSKGVRRADGSLIKFDGNAAVLLNAKLEPIGTRIFGPVTRELRTARFMKIVSLAPEVL.

It belongs to the universal ribosomal protein uL14 family. As to quaternary structure, part of the 50S ribosomal subunit. Forms a cluster with proteins L3 and L19. In the 70S ribosome, L14 and L19 interact and together make contacts with the 16S rRNA in bridges B5 and B8.

In terms of biological role, binds to 23S rRNA. Forms part of two intersubunit bridges in the 70S ribosome. The chain is Large ribosomal subunit protein uL14 from Nitrosospira multiformis (strain ATCC 25196 / NCIMB 11849 / C 71).